A 337-amino-acid polypeptide reads, in one-letter code: tRNA pseudouridine synthase D (337 aa).

The Nucleophile role is filled by aspartate 77. Positions 152–308 (GFPNYFTEQR…ARDFHWEFVE (157 aa)) constitute a TRUD domain.

The protein belongs to the pseudouridine synthase TruD family.

It catalyses the reaction uridine(13) in tRNA = pseudouridine(13) in tRNA. Responsible for synthesis of pseudouridine from uracil-13 in transfer RNAs. This chain is tRNA pseudouridine synthase D, found in Mannheimia succiniciproducens (strain KCTC 0769BP / MBEL55E).